Reading from the N-terminus, the 179-residue chain is Insulin-like growth factor 2 (179 aa).

Residues 1–24 form the signal peptide; sequence MGITAGKSVLVLLAFLAFASCCYA. The b stretch occupies residues 25-52; sequence AYRPSETLCGGELVDTLQFVCGDRGFYF. Disulfide bonds link Cys33–Cys71, Cys45–Cys84, and Cys70–Cys75. The tract at residues 53-64 is c; it reads SRPSSRINRRSR. The segment at 65–85 is a; sequence GIVEECCFRSCDLALLETYCA. The tract at residues 86 to 91 is d; it reads TPAKSE. Positions 92-179 are cleaved as a propeptide — e peptide; the sequence is RDVSASTTVL…GGASSKASSD (88 aa). Residue Thr106 is glycosylated (O-linked (GalNAc...) threonine). O-linked (GalNAc...) serine glycosylation is present at Ser154. Residues 160 to 179 are disordered; the sequence is ALPTQDPATHGGASSKASSD. A glycan (O-linked (GalNAc...) threonine) is linked at Thr163.

This sequence belongs to the insulin family. Interacts with MYORG; this interaction is required for IGF2 secretion. Interacts with integrins ITGAV:ITGB3 and ITGA6:ITGB4; integrin-binding is required for IGF2 signaling. Interacts with IGFBP2. In terms of processing, proteolytically processed by PCSK4, proIGF2 is cleaved at Arg-128 and Arg-92 to generate big-IGF2 and mature IGF2.

The protein localises to the secreted. Its function is as follows. The insulin-like growth factors possess growth-promoting activity. Major fetal growth hormone in mammals. Plays a key role in regulating fetoplacental development. IGF2 is influenced by placental lactogen. Also involved in tissue differentiation. In adults, involved in glucose metabolism in adipose tissue, skeletal muscle and liver. Acts as a ligand for integrin which is required for IGF2 signaling. Positively regulates myogenic transcription factor MYOD1 function by facilitating the recruitment of transcriptional coactivators, thereby controlling muscle terminal differentiation. Inhibits myoblast differentiation and modulates metabolism via increasing the mitochondrial respiration rate. Functionally, preptin undergoes glucose-mediated co-secretion with insulin, and acts as a physiological amplifier of glucose-mediated insulin secretion. Exhibits osteogenic properties by increasing osteoblast mitogenic activity through phosphoactivation of MAPK1 and MAPK3. This chain is Insulin-like growth factor 2, found in Bos taurus (Bovine).